A 263-amino-acid polypeptide reads, in one-letter code: Trem-like transcript 4 protein (263 aa).

The signal sequence occupies residues 1–28; the sequence is MAWRYSQLLLVPVQLVFLASVCCPGVWG. Positions 29–132 constitute an Ig-like V-type domain; it reads STVSEELHRM…LREVTVLRNI (104 aa). Over 29 to 200 the chain is Extracellular; the sequence is STVSEELHRM…GWTSPGLLVS (172 aa). An intrachain disulfide couples cysteine 47 to cysteine 116. The N-linked (GlcNAc...) asparagine glycan is linked to asparagine 100. The segment at 168–191 is disordered; it reads SPEETTDSSINGTGHRNQSSSSPG. A helical membrane pass occupies residues 201–221; the sequence is VQYGLLLLKALMLSVFCVLLC. Residues 222–263 lie on the Cytoplasmic side of the membrane; that stretch reads WRSGQGREYMAETMELSKLPHISKSLDTVSHISGYEKKANWY.

In terms of assembly, interacts with TYROBP/DAP12. As to expression, predominantly expressed in spleen, with highest levels on selected populations of macrophages, including red pulp macrophages, and on subsets of dendritic cells (DC), mostly on CD8alpha(+) DC (at protein level). Also expressed on blood and spleen Ly6C(low) monocytes (at protein level). Not expressed on lymphocytes or granulocytes (at protein level).

The protein resides in the cell membrane. Functionally, positively regulates Toll-like receptor signaling via TLR7, TLR9 and TLR13 in neutrophils and splenic macrophages. Regulates TLR7 signaling by controlling ligand-induced recruitment of TLR7 from the endoplasmic reticulum to endosomes and lysosomes. Positively regulates Toll-like receptor TLR9-induced production of inflammatory cytokines but is dispensable for IFNB1 production. Involved in the anti-viral response to several viruses including influenza virus, vesicular stomatitis virus and cytomegalovirus. Binds to late apoptotic, and necrotic cells, but not living or early apoptotic cells, but is not essential for uptake of dying cells by dendritic cells (DCs). Does not bind nucleic acids. May participate in antigen presentation. This Mus musculus (Mouse) protein is Trem-like transcript 4 protein (Treml4).